The following is an 87-amino-acid chain: Small ribosomal subunit protein bS20 (87 aa).

Residues 1 to 27 are disordered; it reads MANSVQATKRARQAEKHRQHNAGMRAA. Residues 9-20 are compositionally biased toward basic residues; the sequence is KRARQAEKHRQH.

It belongs to the bacterial ribosomal protein bS20 family.

Its function is as follows. Binds directly to 16S ribosomal RNA. This chain is Small ribosomal subunit protein bS20, found in Hydrogenovibrio crunogenus (strain DSM 25203 / XCL-2) (Thiomicrospira crunogena).